The following is a 593-amino-acid chain: Methylenetetrahydrofolate reductase (NADH) 1 (593 aa).

The Proton donor/acceptor role is filled by Glu21. Residues Glu21 to Lys26 and Thr52 to Trp53 contribute to the NAD(+) site. FAD contacts are provided by residues Thr52–Trp53, His81, Arg111–Asp113, Tyr153, His157–Ala160, Asp175, and Lys182. Asp113 is a binding site for substrate. Residues Gln193 and Tyr285 each coordinate substrate.

The protein belongs to the methylenetetrahydrofolate reductase family. As to quaternary structure, homodimer. FAD is required as a cofactor.

It carries out the reaction (6S)-5-methyl-5,6,7,8-tetrahydrofolate + NAD(+) = (6R)-5,10-methylene-5,6,7,8-tetrahydrofolate + NADH + H(+). It participates in one-carbon metabolism; tetrahydrofolate interconversion. With respect to regulation, plant MTHFRs strongly prefer NADH over NADPH. Not inhibited by methionine or S-adenosylmethionine. Its function is as follows. The probable reversibility of the MTHFR reaction in plants suggests that they can metabolize the methyl group of 5,10-methylenetetrahydrofolate to serine, sugars and starch. The chain is Methylenetetrahydrofolate reductase (NADH) 1 from Zea mays (Maize).